Here is a 490-residue protein sequence, read N- to C-terminus: MPAVQLLLLACLLGGVGARTAQFQKANDRSGRCQYTFSVASPSESSCPEQGQAMLAIQELQRDSSEQRATLESTKARLSSLEALLHRLTSGQPAGPLETHQGLQRELEALRREREQLETQTQELESAYSNLVRDKSALEEEKRRLQAENEDLARRLESSSQEVASLRRGQCPQAHSSSQDVPSGSREVAKWNLENMDFQELKSELTEVPASQILKESPSGHPRNEEGGTGCGELVWVGEPITLRTAETITGKYGVWMRDPRAAFPYTGETTWRIDTVGTDIRQVFEYDHIRKFTQGYPSKVHVLPRPLESTGAVVYRGSLYFQAAESRTVLRYDLRTETLKAEKEIPGAGYHGQFPYSWGGYTDIDLAVDEIGLWVIYSTEAAKGAIVLSKLNPETLELEQTWETNIRKQSVANAFIICGTLYTVSSYSSPDATVNFAYDTGTGSSKALTVPFKNRYKYSSMIDYNPLERKLFAWDNFNMVSYDIKLSRL.

The N-terminal stretch at 1 to 18 (MPAVQLLLLACLLGGVGA) is a signal peptide. A coiled-coil region spans residues 51–170 (GQAMLAIQEL…QEVASLRRGQ (120 aa)). The tract at residues 152-186 (LARRLESSSQEVASLRRGQCPQAHSSSQDVPSGSR) is disordered. A compositionally biased stretch (polar residues) spans 173–182 (QAHSSSQDVP). The 260-residue stretch at 230 to 489 (GCGELVWVGE…MVSYDIKLSR (260 aa)) folds into the Olfactomedin-like domain. A disulfide bond links Cys231 and Cys419. Ca(2+) contacts are provided by Asp366, Asn414, Ala415, Ile463, and Asp464. A Microbody targeting signal motif is present at residues 488 to 490 (SRL).

As to quaternary structure, homodimer (via N-terminus). Can also form higher oligomers. Interacts with OLFM3, FN1, NRCAM, GLDN and NFASC. Interacts (via N-terminus) with MYL2. Interacts with SFRP1, FRZB, FZD7, FZD10, FZD1 and WIF1; regulates Wnt signaling. Interacts with SNTA1; regulates muscle hypertrophy. Interacts with ERBB2 and ERBB3; activates ERBB2-ERBB3 signaling pathway. Interacts with SNCG; affects its secretion and its aggregation. In terms of processing, palmitoylated. Post-translationally, undergoes a calcium-dependent proteolytic cleavage at Gln-212 by CAPN2 in the endoplasmic reticulum. The result is the production of two fragments, one of 35 kDa containing the C-terminal olfactomedin-like domain, and another of 20 kDa containing the N-terminal leucine zipper-like domain. Glycosylated. In terms of tissue distribution, the myocilin 35 kDa fragment is detected in iris and ciliary body.

It localises to the secreted. Its subcellular location is the golgi apparatus. The protein localises to the cytoplasmic vesicle. It is found in the extracellular space. The protein resides in the extracellular matrix. It localises to the extracellular exosome. Its subcellular location is the mitochondrion. The protein localises to the mitochondrion intermembrane space. It is found in the mitochondrion inner membrane. The protein resides in the mitochondrion outer membrane. It localises to the rough endoplasmic reticulum. Its subcellular location is the cell projection. The protein localises to the cilium. It is found in the endoplasmic reticulum. In terms of biological role, secreted glycoprotein regulating the activation of different signaling pathways in adjacent cells to control different processes including cell adhesion, cell-matrix adhesion, cytoskeleton organization and cell migration. Promotes substrate adhesion, spreading and formation of focal contacts. Negatively regulates cell-matrix adhesion and stress fiber assembly through Rho protein signal transduction. Modulates the organization of actin cytoskeleton by stimulating the formation of stress fibers through interactions with components of Wnt signaling pathways. Promotes cell migration through activation of PTK2 and the downstream phosphatidylinositol 3-kinase signaling. Plays a role in bone formation and promotes osteoblast differentiation in a dose-dependent manner through mitogen-activated protein kinase signaling. Mediates myelination in the peripheral nervous system through ERBB2/ERBB3 signaling. Plays a role as a regulator of muscle hypertrophy through the components of dystrophin-associated protein complex. Involved in positive regulation of mitochondrial depolarization. Plays a role in neurite outgrowth. May participate in the obstruction of fluid outflow in the trabecular meshwork. This is Myocilin (MYOC) from Bos taurus (Bovine).